Here is a 1653-residue protein sequence, read N- to C-terminus: MSSASSEPGNGDASQQPLLGLDTVIQRLEDTILSPTASREDRALTVRGEGRQASPTPVPTRIREIVAGSLSEEPPQAGVQEPTATVARVQEENELLQEELTRLGDLLAQASAERDELASRCRVVSEQLQARLETTEAQLRRSELEHSVDLEEALGRLEAAEERSTGLCQVNALLREQLEHMKKANDALGRELAGMTGSVQRLQGELELRRWAQRQTRSGGLGQPRDLLLLWRQAVVLGTDLAELRVATERGLADLQADTARTARRLHTACLNLDSNLRLSASSTASTLGQQLRDKAGEMLQLQGRWDAEKVALQARLSEQTLLVEKLTEQNEQKAKTIAALRTDLQNLVAQEDARCLELAGSSITELGEPRRPLRSPQRATSPHQGASPPHICSPATLDPALQAMRAAIERRWRREQELCLQLKSSQALVASLQEQLSESRRELWAAQKLQQERAREQAREREALRGQLEAQRLEVQQCRASCKLLGREKAALEMVVEELKGKADAADAEKQGLEAEAAELQRSLLLQAERREELALRRERSCRALETSQGRLQQLEEKVSGLREELASVREALSTAQLQRDVVESEREGLRSALARAECSNADLELLVRRLKSEGVEQRDSLAAMAALMEGLAQDKSALNHLALQLEQERDQLREQRKTLEQERARAGEQLAQAEQQLALERAERRGLQQACGRLEQRQEQLEGQAALLGREKAQLQEQVGQVTCQKQALEEQLAQSLQDQEAQMGTLQQALQGKDALSEERAQLLAKQEALERQGRLAAEEAADLRVERDSLESSLLEAQQLATKLQEQLEEEARSAGLARQALQVEMEQLQSDWEVQEMKLRQDTVRLQRQVAQQEREAQRALESQALAHREALAQLQREKETLSLTLAEEKEVARCQLEQEKELVTKSAAEREALKGEIQSLKQERDESLLQLEHKMQQALSLKETERSLLSEELSRARRTLERVQQEAQSQQEQAQATISATTEELKALQAQFEDAITAHQRETTALRESLQDLAAERGDVEREAERLRAQLTVAQEGLAALRQELQGVEESREGLHREAQEARRALSDEAREKDVLLLFNSELRATICRAEQEKASFKRSKEEKEQKLLILEEAQAALQQEASALRAHLWELEQAGGDARQELRELHRQVRTLKAENQRRSGEAHELQAQCSQEVLELRRQAAKAEAKHEGARKEVLGLQRKLAEVEAAGEAHGQRLQEHLRESRGAEQTLRAELHSVTRKLQEASGVADALQARLDQACHRIHSLEQELAQAEGARQDAEAQLGRLCSTLRRGLGLQRQSPWASPEQPGSPTKGSDSSQALPGQQGTSPPARPHSPLRWPSPTPGGRSSELMDVATVQDILRDFVQKLREAQRERDDSRIQMATLSSRLSEAECRCARAQSRVGQLQKALAEAEEGQRRVEGALSSARAARALQKEALRRLELEHLASVRAAGQEKRRLQEQLETLRQALEESRRHSQGLAKQGKLLEEQLTNLEHRCQKAEVSLEPLRQMEQETLKREEDVARLGAEKEQLDQSLNSLHQEVDGALRQNQQLQAQMTEMEQAHTQRLQDLTAQHQRDLATEAERLHGARPQATQALESQEWTHQQQVKVLEEQVASLKEQLDQEVQWRQQAHLGQAFQTGHAQRD.

Positions 1 to 17 (MSSASSEPGNGDASQQP) are enriched in polar residues. The disordered stretch occupies residues 1 to 57 (MSSASSEPGNGDASQQPLLGLDTVIQRLEDTILSPTASREDRALTVRGEGRQASPTP). Residues 38 to 50 (SREDRALTVRGEG) are compositionally biased toward basic and acidic residues. Coiled-coil stretches lie at residues 86–145 (VARV…SELE) and 310–351 (KVAL…LVAQ). Residues 367 to 396 (LGEPRRPLRSPQRATSPHQGASPPHICSPA) are disordered. Residues 423–1215 (LKSSQALVAS…QRKLAEVEAA (793 aa)) are a coiled coil. The interval 1302-1356 (GLQRQSPWASPEQPGSPTKGSDSSQALPGQQGTSPPARPHSPLRWPSPTPGGRSS) is disordered. Residues 1304-1335 (QRQSPWASPEQPGSPTKGSDSSQALPGQQGTS) show a composition bias toward polar residues. Residues 1361-1570 (VATVQDILRD…QAQMTEMEQA (210 aa)) adopt a coiled-coil conformation.

It belongs to the rootletin family.

The sequence is that of Ciliary rootlet coiled-coil protein 2 from Homo sapiens (Human).